The primary structure comprises 362 residues: Chorismate synthase (362 aa).

NADP(+) is bound at residue arginine 46. Residues arginine 122–serine 124, asparagine 238–alanine 239, glycine 278, lysine 293–serine 297, and arginine 319 each bind FMN.

It belongs to the chorismate synthase family. Homotetramer. FMNH2 is required as a cofactor.

It carries out the reaction 5-O-(1-carboxyvinyl)-3-phosphoshikimate = chorismate + phosphate. It functions in the pathway metabolic intermediate biosynthesis; chorismate biosynthesis; chorismate from D-erythrose 4-phosphate and phosphoenolpyruvate: step 7/7. Catalyzes the anti-1,4-elimination of the C-3 phosphate and the C-6 proR hydrogen from 5-enolpyruvylshikimate-3-phosphate (EPSP) to yield chorismate, which is the branch point compound that serves as the starting substrate for the three terminal pathways of aromatic amino acid biosynthesis. This reaction introduces a second double bond into the aromatic ring system. The chain is Chorismate synthase from Campylobacter jejuni subsp. jejuni serotype O:2 (strain ATCC 700819 / NCTC 11168).